The chain runs to 592 residues: Methionine--tRNA ligase (592 aa).

Positions 12–22 (PYANGPFHVGH) match the 'HIGH' region motif. Zn(2+) contacts are provided by Cys144, Cys147, Cys157, and Cys160. A 'KMSKS' region motif is present at residues 342 to 346 (KMSTS). Position 345 (Thr345) interacts with ATP.

This sequence belongs to the class-I aminoacyl-tRNA synthetase family. MetG type 1 subfamily. In terms of assembly, monomer. Zn(2+) is required as a cofactor.

The protein resides in the cytoplasm. The catalysed reaction is tRNA(Met) + L-methionine + ATP = L-methionyl-tRNA(Met) + AMP + diphosphate. Functionally, is required not only for elongation of protein synthesis but also for the initiation of all mRNA translation through initiator tRNA(fMet) aminoacylation. The polypeptide is Methionine--tRNA ligase (Roseiflexus castenholzii (strain DSM 13941 / HLO8)).